A 448-amino-acid polypeptide reads, in one-letter code: NADP-specific glutamate dehydrogenase (448 aa).

The substrate site is built by K88, Q109, and K112. K124 acts as the Proton donor in catalysis. Residue G163 coordinates substrate. The NADP(+) site is built by T207 and N238. Residue S375 coordinates substrate.

This sequence belongs to the Glu/Leu/Phe/Val dehydrogenases family. Homohexamer.

It carries out the reaction L-glutamate + NADP(+) + H2O = 2-oxoglutarate + NH4(+) + NADPH + H(+). Catalyzes the reversible oxidative deamination of glutamate to alpha-ketoglutarate and ammonia. The sequence is that of NADP-specific glutamate dehydrogenase (gdhA) from Psychrobacter sp. (strain TAD1).